Consider the following 154-residue polypeptide: UPF0756 membrane protein CKR_1028 (154 aa).

The next 4 helical transmembrane spans lie at Ile-5 to Ala-25, Asn-48 to Gly-68, Trp-82 to Met-102, and Ile-113 to Val-133.

Belongs to the UPF0756 family.

It localises to the cell membrane. The sequence is that of UPF0756 membrane protein CKR_1028 from Clostridium kluyveri (strain NBRC 12016).